Reading from the N-terminus, the 182-residue chain is Ferritin heavy chain (182 aa).

Met1 carries the N-acetylmethionine modification. Residue Thr2 is modified to N-acetylthreonine; in Ferritin heavy chain, N-terminally processed. Residues 11-160 (QNYHQDAEAA…DHVTNLRKMG (150 aa)) enclose the Ferritin-like diiron domain. Positions 28, 63, 66, 108, and 142 each coordinate Fe cation.

The protein belongs to the ferritin family. As to quaternary structure, oligomer of 24 subunits. There are two types of subunits: L (light) chain and H (heavy) chain. The major chain can be light or heavy, depending on the species and tissue type. The functional molecule forms a roughly spherical shell with a diameter of 12 nm and contains a central cavity into which the insoluble mineral iron core is deposited. Interacts with NCOA4; NCOA4 promotes targeting of the iron-binding ferritin complex to autolysosomes following starvation or iron depletion.

It is found in the cytoplasm. The protein resides in the cytoplasmic vesicle. It localises to the autophagosome. Its subcellular location is the autolysosome. It carries out the reaction 4 Fe(2+) + O2 + 4 H(+) = 4 Fe(3+) + 2 H2O. In terms of biological role, stores iron in a soluble, non-toxic, readily available form. Important for iron homeostasis. Has ferroxidase activity. Iron is taken up in the ferrous form and deposited as ferric hydroxides after oxidation. Also plays a role in delivery of iron to cells. Mediates iron uptake in capsule cells of the developing kidney. Degraded to release iron upon autophagy activation by nutrient starvation. The polypeptide is Ferritin heavy chain (Fth1) (Mus musculus (Mouse)).